Reading from the N-terminus, the 385-residue chain is 1-deoxy-D-xylulose 5-phosphate reductoisomerase (385 aa).

NADPH-binding residues include Thr11, Gly12, Ser13, Ile14, Gln39, and Asn117. Residue Lys118 coordinates 1-deoxy-D-xylulose 5-phosphate. Glu119 contacts NADPH. Asp143 contributes to the Mn(2+) binding site. 1-deoxy-D-xylulose 5-phosphate-binding residues include Ser144, Glu145, Ser170, and His193. Glu145 contacts Mn(2+). An NADPH-binding site is contributed by Gly199. Positions 206, 211, 212, and 215 each coordinate 1-deoxy-D-xylulose 5-phosphate. Glu215 is a binding site for Mn(2+).

It belongs to the DXR family. Mg(2+) serves as cofactor. The cofactor is Mn(2+).

It carries out the reaction 2-C-methyl-D-erythritol 4-phosphate + NADP(+) = 1-deoxy-D-xylulose 5-phosphate + NADPH + H(+). It functions in the pathway isoprenoid biosynthesis; isopentenyl diphosphate biosynthesis via DXP pathway; isopentenyl diphosphate from 1-deoxy-D-xylulose 5-phosphate: step 1/6. In terms of biological role, catalyzes the NADPH-dependent rearrangement and reduction of 1-deoxy-D-xylulose-5-phosphate (DXP) to 2-C-methyl-D-erythritol 4-phosphate (MEP). The sequence is that of 1-deoxy-D-xylulose 5-phosphate reductoisomerase from Thermomicrobium roseum (strain ATCC 27502 / DSM 5159 / P-2).